Consider the following 82-residue polypeptide: Endocuticle structural protein SgAbd-6 (82 aa).

Q1 carries the pyrrolidone carboxylic acid modification. Residues 18–82 (LGQYTFGFKT…ENGFQPQYTQ (65 aa)) form the Chitin-binding type R&amp;R domain.

Component of the abdominal endocuticle. This Schistocerca gregaria (Desert locust) protein is Endocuticle structural protein SgAbd-6.